The following is a 694-amino-acid chain: Beta-galactosidase (694 aa).

The interval 1-31 (MGKRFPSGWFSPRVHPPRRQRSPMTNQATPG) is disordered. Residues 22-31 (SPMTNQATPG) show a composition bias toward polar residues. The substrate site is built by R144 and N182. E183 functions as the Proton donor in the catalytic mechanism. E341 serves as the catalytic Nucleophile. Substrate contacts are provided by residues W349 and 389–392 (EKFH).

Belongs to the glycosyl hydrolase 42 family. Homotrimer.

It carries out the reaction Hydrolysis of terminal non-reducing beta-D-galactose residues in beta-D-galactosides.. Its activity is regulated as follows. Strongly inhibited by glucose. No activity is lost during treatment with 100 mM EDTA after 2 hours. Activity not considerably affected by metal ions (5 mM), including Na(+), K(+), Mg(2+), Co(2+) and Ca(2+). Completely inhibited by Cu(2+) and Zn(2+) (5 mM) and is strongly inhibited by Mn(2+) (11%), Fe(2+) (25%) and Ni(2+) (38%) in comparison with the activity in the absence of cations (100%). Activity not affected by dithiothreitol, beta-mercaptoethanol and L-cysteine whereas reduced glutathione almost completely inactivates it. With ONPG as substrate, the addition of ethanol up to 20% still slightly stimulates activity. The activity increases up to 120% in the presence of 8% v/v ethanol at pH 5.5. In terms of biological role, hydrolyzes p-nitrophenyl-beta-D-galactopyranoside (PNPG), o-nitrophenyl-beta-D-galactopyranoside (ONPG) and chromogen 5-bromo-4-chloro-3-indolyl-beta-D-galactopyranoside (X-gal), with highest activity against PNPG. Also acts on p-nitrophenyl-beta-D-glucopyranoside (PNPGlu) and o-nitrophenyl-beta-D-glucopyranoside (ONPGlu), but with significantly lower activity. The sequence is that of Beta-galactosidase from Arthrobacter sp.